We begin with the raw amino-acid sequence, 734 residues long: Photosystem I P700 chlorophyll a apoprotein A2 (734 aa).

A run of 8 helical transmembrane segments spans residues 46–69 (IFAS…FHVA), 135–158 (LYTG…FHLQ), 175–199 (LDHH…HVAI), 273–291 (IAHH…GHMY), 330–353 (LHFQ…QHMY), 369–395 (AALY…IFFI), 417–439 (AIIS…LYVH), and 517–535 (FLVH…LILV). [4Fe-4S] cluster is bound by residues Cys-559 and Cys-568. 2 consecutive transmembrane segments (helical) span residues 575 to 596 (AFYL…YWHW) and 643 to 665 (LSVW…MFLI). Chlorophyll a-binding residues include His-654, Met-662, and Tyr-670. Residue Trp-671 participates in phylloquinone binding. The chain crosses the membrane as a helical span at residues 707-727 (LVGLAHFSVGYIFTYAAFLIA).

This sequence belongs to the PsaA/PsaB family. In terms of assembly, the PsaA/B heterodimer binds the P700 chlorophyll special pair and subsequent electron acceptors. PSI consists of a core antenna complex that captures photons, and an electron transfer chain that converts photonic excitation into a charge separation. The eukaryotic PSI reaction center is composed of at least 11 subunits. P700 is a chlorophyll a/chlorophyll a' dimer, A0 is one or more chlorophyll a, A1 is one or both phylloquinones and FX is a shared 4Fe-4S iron-sulfur center. serves as cofactor.

It is found in the plastid. The protein resides in the chloroplast thylakoid membrane. It carries out the reaction reduced [plastocyanin] + hnu + oxidized [2Fe-2S]-[ferredoxin] = oxidized [plastocyanin] + reduced [2Fe-2S]-[ferredoxin]. Functionally, psaA and PsaB bind P700, the primary electron donor of photosystem I (PSI), as well as the electron acceptors A0, A1 and FX. PSI is a plastocyanin-ferredoxin oxidoreductase, converting photonic excitation into a charge separation, which transfers an electron from the donor P700 chlorophyll pair to the spectroscopically characterized acceptors A0, A1, FX, FA and FB in turn. Oxidized P700 is reduced on the lumenal side of the thylakoid membrane by plastocyanin. In Cycas taitungensis (Prince sago), this protein is Photosystem I P700 chlorophyll a apoprotein A2.